The sequence spans 263 residues: HTH-type transcriptional regulator KdgR (263 aa).

The HTH iclR-type domain occupies valine 13–leucine 74. A DNA-binding region (H-T-H motif) is located at residues isoleucine 34 to glutamine 53. In terms of domain architecture, IclR-ED spans leucine 89–tyrosine 258.

The protein resides in the cytoplasm. Transcriptional repressor that negatively regulates the expression of kdgT, kdgK and kdgA, which encode proteins involved in transport and catabolism of 2-keto-3-deoxygluconate (KDG). Also represses expression of eda, which encodes the Entner-Doudoroff aldolase, by binding to its P2 promoter region. This is HTH-type transcriptional regulator KdgR from Escherichia coli (strain K12).